A 224-amino-acid polypeptide reads, in one-letter code: tRNA (guanine-N(7)-)-methyltransferase (224 aa).

Positions 57, 82, and 109 each coordinate S-adenosyl-L-methionine. Asp-167 serves as a coordination point for substrate.

The protein belongs to the class I-like SAM-binding methyltransferase superfamily. TrmB family.

The catalysed reaction is guanosine(46) in tRNA + S-adenosyl-L-methionine = N(7)-methylguanosine(46) in tRNA + S-adenosyl-L-homocysteine. Its pathway is tRNA modification; N(7)-methylguanine-tRNA biosynthesis. In terms of biological role, catalyzes the formation of N(7)-methylguanine at position 46 (m7G46) in tRNA. The sequence is that of tRNA (guanine-N(7)-)-methyltransferase from Chloroflexus aurantiacus (strain ATCC 29366 / DSM 635 / J-10-fl).